Here is a 1174-residue protein sequence, read N- to C-terminus: Tyrosine-protein phosphatase non-receptor type 21 (1174 aa).

Residues 23-308 form the FERM domain; that stretch reads LVARIQLLNN…ARHKFYRLNQ (286 aa). Polar residues predominate over residues 396 to 423; sequence SAHSTNSLNNPQPYLQPSPMSSNPSITG. The segment at 396-445 is disordered; it reads SAHSTNSLNNPQPYLQPSPMSSNPSITGSDVMRPDYLPSHRHSAVIPPSY. Residues Ser-577, Ser-589, Ser-590, Ser-637, and Ser-673 each carry the phosphoserine modification. The disordered stretch occupies residues 673–692; it reads SQPSVFTERTQREGPEEAEG. Positions 681–692 are enriched in basic and acidic residues; it reads RTQREGPEEAEG. Residues Ser-710 and Ser-711 each carry the phosphoserine modification. Disordered regions lie at residues 711–745 and 769–806; these read SEEE…DPPG and KRMM…TSGR. Acidic residues predominate over residues 712-722; the sequence is EEEEDEDFEEE. The segment covering 796-805 has biased composition (polar residues); sequence MSESDLTTSG. Residues Ser-797, Ser-799, and Ser-804 each carry the phosphoserine modification. The Tyrosine-protein phosphatase domain maps to 896–1167; sequence VFTEYERILK…TFVYRVLIQF (272 aa). Residues Glu-1067, 1108–1114, and Gln-1152 each bind substrate; that span reads CSAGVGR. The active-site Phosphocysteine intermediate is Cys-1108.

This sequence belongs to the protein-tyrosine phosphatase family. Non-receptor class subfamily.

The protein localises to the cytoplasm. It localises to the cytoskeleton. It catalyses the reaction O-phospho-L-tyrosyl-[protein] + H2O = L-tyrosyl-[protein] + phosphate. This chain is Tyrosine-protein phosphatase non-receptor type 21 (PTPN21), found in Homo sapiens (Human).